Here is a 127-residue protein sequence, read N- to C-terminus: Aspartate 1-decarboxylase (127 aa).

Residue Ser-25 is the Schiff-base intermediate with substrate; via pyruvic acid of the active site. Ser-25 carries the pyruvic acid (Ser) modification. Thr-57 provides a ligand contact to substrate. Tyr-58 functions as the Proton donor in the catalytic mechanism. Substrate is bound at residue 73–75; it reads GSA.

It belongs to the PanD family. Heterooctamer of four alpha and four beta subunits. Requires pyruvate as cofactor. Post-translationally, is synthesized initially as an inactive proenzyme, which is activated by self-cleavage at a specific serine bond to produce a beta-subunit with a hydroxyl group at its C-terminus and an alpha-subunit with a pyruvoyl group at its N-terminus.

It localises to the cytoplasm. The enzyme catalyses L-aspartate + H(+) = beta-alanine + CO2. It participates in cofactor biosynthesis; (R)-pantothenate biosynthesis; beta-alanine from L-aspartate: step 1/1. Functionally, catalyzes the pyruvoyl-dependent decarboxylation of aspartate to produce beta-alanine. This chain is Aspartate 1-decarboxylase, found in Polaromonas naphthalenivorans (strain CJ2).